The primary structure comprises 633 residues: Ankyrin repeat and SOCS box protein 2 (633 aa).

The region spanning 26–45 is the UIM domain; sequence SEDELVQMAIEQSLADKTRG. ANK repeat units follow at residues 102–131, 135–165, 169–198, 202–231, 235–264, 268–297, 301–330, 334–363, 366–395, 408–437, 438–467, and 474–502; these read APVD…NLSE, EGWL…VIDQ, QEET…EPDI, SRET…DTNH, RGWT…KVEA, YGIT…DINT, DSAS…DANK, DGML…RTRV, SGIS…DVNA, RRSS…DPNR, DVIN…NIDA, and TAFP…NGEP. Ser-369 is subject to Phosphoserine. In terms of domain architecture, SOCS box spans 579 to 633; it reads EDWAVIKEKAEPPRPLAHLCRLRVRKAIGKYRIKLLDTLPLPGRLIRYLKYENTQ.

It belongs to the ankyrin SOCS box (ASB) family. Component of a probable ECS E3 ubiquitin-protein ligase complex which contains CUL5, either RBX1 or RNF7/RBX2, Elongin BC complex (ELOB and ELOC) and ASB2. Interacts with SKP2. Through its interaction with SKP2, likely to bridge the formation of dimeric E3-ubiquitin-protein ligase complexes composed of an ECS complex and an SCF(SKP2) complex. Interacts with JAK2; the interaction targets JAK2 for Notch-mediated proteasomal degradation. Interacts with TCF3/E2A; the interaction is mediated by SKP2 and targets TCF3 for Notch-mediated proteasomal degradation. Interacts with DES. Monoubiquitinated.

Its subcellular location is the cytoplasm. The protein resides in the cytoskeleton. It localises to the stress fiber. The protein localises to the myofibril. It is found in the sarcomere. Its subcellular location is the z line. It participates in protein modification; protein ubiquitination. Functionally, substrate-recognition component of a SCF-like ECS (Elongin-Cullin-SOCS-box protein) E3 ubiquitin-protein ligase complex which mediates the ubiquitination and subsequent proteasomal degradation of target proteins. Mediates Notch-induced ubiquitination and degradation of substrates including E2A and JAK2. Required during embryonic heart development for complete heart looping. Required for cardiomyocyte differentiation. Involved in myogenic differentiation and targets filamin FLNB for proteasomal degradation but not filamin FLNA. Also targets DES for proteasomal degradation. Acts as a negative regulator of skeletal muscle mass. The protein is Ankyrin repeat and SOCS box protein 2 of Bos taurus (Bovine).